The chain runs to 781 residues: Serine/threonine-protein kinase PLK4 (781 aa).

In terms of domain architecture, Protein kinase spans 14-268 (YEVQHLLGKG…LEQVLRHPFM (255 aa)). Residues 20–28 (LGKGGFACV) and Lys43 contribute to the ATP site. Asp139 functions as the Proton acceptor in the catalytic mechanism. One can recognise a Cryptic POLO box 1 (CPB1) domain in the interval 397 to 514 (TEHISVPPLN…ARFVGLVKSK (118 aa)). Residues 463 to 486 (QPDPGRGLPIQEQTSETHSSGTDN) form a disordered region. The span at 473–486 (QEQTSETHSSGTDN) shows a compositional bias: polar residues. One can recognise a Cryptic POLO box 2 (CPB2) domain in the interval 515–618 (TPKVTYFSAL…GRRPVVEVLP (104 aa)). One can recognise a POLO box domain in the interval 672 to 751 (PIKRLNVPGV…LPQVQMKLRC (80 aa)).

It belongs to the protein kinase superfamily. Ser/Thr protein kinase family. CDC5/Polo subfamily. Homodimer. Ubiquitinated by the SCF(Slimb) ubiquitin ligase complex; leading to its degradation by the proteasome during interphase and regulating centriole number and ensuring the block to centriole reduplication.

The protein resides in the cytoplasm. The protein localises to the cytoskeleton. Its subcellular location is the microtubule organizing center. It is found in the centrosome. It localises to the centriole. The enzyme catalyses L-seryl-[protein] + ATP = O-phospho-L-seryl-[protein] + ADP + H(+). The catalysed reaction is L-threonyl-[protein] + ATP = O-phospho-L-threonyl-[protein] + ADP + H(+). Its function is as follows. Serine/threonine-protein kinase that plays a central role in centriole duplication. Able to trigger procentriole formation on the surface of the mother centriole cylinder, using mother centriole as a platform, leading to the recruitment of centriole biogenesis proteins such as sas-6. When overexpressed, it is able to induce centrosome amplification through the simultaneous generation of multiple procentrioles adjoining each parental centriole during S phase. Centrosome amplification following overexpression can initiate tumorigenesis, highlighting the importance of centrosome regulation in cancers. The chain is Serine/threonine-protein kinase PLK4 (SAK) from Drosophila virilis (Fruit fly).